The sequence spans 403 residues: Phosphoglycerate kinase (403 aa).

Substrate-binding positions include 22 to 24 (DLN), Arg-37, 60 to 63 (HLGR), Arg-119, and Arg-156. ATP contacts are provided by residues Lys-206, Gly-302, Glu-333, and 359–362 (GGDS).

The protein belongs to the phosphoglycerate kinase family. Monomer.

Its subcellular location is the cytoplasm. The enzyme catalyses (2R)-3-phosphoglycerate + ATP = (2R)-3-phospho-glyceroyl phosphate + ADP. It participates in carbohydrate degradation; glycolysis; pyruvate from D-glyceraldehyde 3-phosphate: step 2/5. The polypeptide is Phosphoglycerate kinase (Streptomyces avermitilis (strain ATCC 31267 / DSM 46492 / JCM 5070 / NBRC 14893 / NCIMB 12804 / NRRL 8165 / MA-4680)).